A 186-amino-acid chain; its full sequence is Lipid A palmitoyltransferase PagP (186 aa).

The first 25 residues, 1 to 25 (MNVSKYVAIFSFVFIQLISVGKVFA), serve as a signal peptide directing secretion. Active-site residues include histidine 58, aspartate 101, and serine 102.

It belongs to the lipid A palmitoyltransferase family. As to quaternary structure, homodimer.

The protein resides in the cell outer membrane. The catalysed reaction is lipid A (E. coli) + a 1-hexadecanoyl-2-acyl-sn-glycero-3-phosphocholine = hepta-acyl lipid A (E. coli) + a 2-acyl-sn-glycero-3-phosphocholine. It catalyses the reaction lipid IIA + a 1-hexadecanoyl-2-acyl-sn-glycero-3-phosphocholine = lipid IIB + a 2-acyl-sn-glycero-3-phosphocholine. It carries out the reaction lipid IVA (E. coli) + a 1-hexadecanoyl-2-acyl-sn-glycero-3-phosphocholine = lipid IVB (E. coli) + a 2-acyl-sn-glycero-3-phosphocholine. In terms of biological role, transfers a palmitate residue from the sn-1 position of a phospholipid to the N-linked hydroxymyristate on the proximal unit of lipid A or its precursors. In Escherichia coli O157:H7, this protein is Lipid A palmitoyltransferase PagP.